The sequence spans 135 residues: Small ribosomal subunit protein uS12 (135 aa).

Aspartate 89 is subject to 3-methylthioaspartic acid. The disordered stretch occupies residues glycine 106–lysine 135. A compositionally biased stretch (basic residues) spans arginine 111–lysine 123. Low complexity predominate over residues alanine 124–lysine 135.

This sequence belongs to the universal ribosomal protein uS12 family. In terms of assembly, part of the 30S ribosomal subunit. Contacts proteins S8 and S17. May interact with IF1 in the 30S initiation complex.

Its function is as follows. With S4 and S5 plays an important role in translational accuracy. In terms of biological role, interacts with and stabilizes bases of the 16S rRNA that are involved in tRNA selection in the A site and with the mRNA backbone. Located at the interface of the 30S and 50S subunits, it traverses the body of the 30S subunit contacting proteins on the other side and probably holding the rRNA structure together. The combined cluster of proteins S8, S12 and S17 appears to hold together the shoulder and platform of the 30S subunit. The sequence is that of Small ribosomal subunit protein uS12 from Hydrogenobaculum sp. (strain Y04AAS1).